The following is a 414-amino-acid chain: Serine--tRNA ligase (414 aa).

230–232 (TAE) contributes to the L-serine binding site. 261–263 (RKE) contributes to the ATP binding site. Residue Glu284 coordinates L-serine. 348-351 (EISS) serves as a coordination point for ATP. Ser382 serves as a coordination point for L-serine.

This sequence belongs to the class-II aminoacyl-tRNA synthetase family. Type-1 seryl-tRNA synthetase subfamily. As to quaternary structure, homodimer. The tRNA molecule binds across the dimer.

It localises to the cytoplasm. The enzyme catalyses tRNA(Ser) + L-serine + ATP = L-seryl-tRNA(Ser) + AMP + diphosphate + H(+). It carries out the reaction tRNA(Sec) + L-serine + ATP = L-seryl-tRNA(Sec) + AMP + diphosphate + H(+). Its pathway is aminoacyl-tRNA biosynthesis; selenocysteinyl-tRNA(Sec) biosynthesis; L-seryl-tRNA(Sec) from L-serine and tRNA(Sec): step 1/1. Catalyzes the attachment of serine to tRNA(Ser). Is also able to aminoacylate tRNA(Sec) with serine, to form the misacylated tRNA L-seryl-tRNA(Sec), which will be further converted into selenocysteinyl-tRNA(Sec). This chain is Serine--tRNA ligase, found in Sulfurovum sp. (strain NBC37-1).